A 1086-amino-acid polypeptide reads, in one-letter code: Formin-like protein 2 (1086 aa).

Gly-2 carries the N-myristoyl glycine lipid modification. Residues 23–469 form the GBD/FH3 domain; that stretch reads LPMPEPGELE…EAIQRQSTLE (447 aa). Position 188 is a phosphoserine (Ser-188). The interval 513-597 is disordered; the sequence is SVGPTMGAAS…APPLPSAPPL (85 aa). Positions 525 to 537 are enriched in pro residues; the sequence is PLPPPPPPLPPSS. Over residues 538-547 the composition is skewed to polar residues; the sequence is DTPETVQNGP. 2 stretches are compositionally biased toward pro residues: residues 548 to 576 and 583 to 597; these read VTPPMPPPPPPPPPPPPPPPPPPPPPLPG and PAPPLAPPLPSAPPL. Positions 616 to 1007 constitute an FH2 domain; it reads IKKPIKTKFR…LMEKLLEQEA (392 aa). The DAD domain maps to 1040–1079; that stretch reads NRHVYEGKDGAIEDIITVLKTVPFTARTAKRGSRFFCEPV.

This sequence belongs to the formin homology family.

It localises to the cytoplasm. Plays a role in the regulation of cell morphology and cytoskeletal organization. Required in the cortical actin filament dynamics. The sequence is that of Formin-like protein 2 from Homo sapiens (Human).